Here is a 551-residue protein sequence, read N- to C-terminus: BAG family molecular chaperone regulator 8, chloroplastic (551 aa).

The span at 1-19 (MASHHHHNHNHVCSRHQNH) shows a compositional bias: basic residues. Positions 1–46 (MASHHHHNHNHVCSRHQNHHNNTPQFATSPNCCNKSNHPSPPPAED) are disordered. The N-terminal 52 residues, 1–52 (MASHHHHNHNHVCSRHQNHHNNTPQFATSPNCCNKSNHPSPPPAEDNLLHLV), are a transit peptide targeting the chloroplast. Polar residues predominate over residues 20–38 (HNNTPQFATSPNCCNKSNH). The 30-residue stretch at 131–160 (RDSAARVIQTHFRSYLVHRSISFRQLKELA) folds into the IQ domain. The 82-residue stretch at 147 to 228 (VHRSISFRQL…RFVQYVDDCV (82 aa)) folds into the BAG domain. The interval 246–281 (GKKPQGFGTSSEDEDNNADMSDDSEEVPVSSIDKRK) is disordered. A compositionally biased stretch (acidic residues) spans 256-271 (SEDEDNNADMSDDSEE). The residue at position 332 (S332) is a Phosphoserine. Disordered stretches follow at residues 414-433 (DEGKRRSSKTGSRVLVKGSG) and 450-551 (NVYK…KMEP). The segment covering 479-499 (GEEKGNVNEVEEIKYVPKENE) has biased composition (basic and acidic residues). A compositionally biased stretch (acidic residues) spans 500–513 (SFEEEEEKETDSEN). Basic and acidic residues predominate over residues 522–534 (EGDKRVTKKEVQH).

Binds to the ATPase domain of HSP70/HSC70 chaperones.

The protein resides in the plastid. It is found in the chloroplast. Co-chaperone that regulates diverse cellular pathways, such as programmed cell death and stress responses. The chain is BAG family molecular chaperone regulator 8, chloroplastic (BAG1) from Arabidopsis thaliana (Mouse-ear cress).